A 399-amino-acid chain; its full sequence is Arylacetamide deacetylase (399 aa).

Residues 1–4 (MRKK) are Cytoplasmic-facing. The chain crosses the membrane as a helical; Signal-anchor for type II membrane protein span at residues 5–25 (YFGFLILGVLLAGYIYVPLPD). Over 26-399 (NVEEPWKIML…QYINWLHENL (374 aa)) the chain is Lumenal. Positions 111 to 113 (HGG) match the Involved in the stabilization of the negatively charged intermediate by the formation of the oxyanion hole motif. Cys-116 and Cys-340 are oxidised to a cystine. The active site involves Ser-189. An N-linked (GlcNAc...) asparagine glycan is attached at Asn-282. Active-site residues include Asp-343 and His-373.

Belongs to the 'GDXG' lipolytic enzyme family.

It localises to the endoplasmic reticulum membrane. Its subcellular location is the microsome membrane. It catalyses the reaction a triacylglycerol + H2O = a diacylglycerol + a fatty acid + H(+). Its function is as follows. Displays cellular triglyceride lipase activity in liver, increases the levels of intracellular fatty acids derived from the hydrolysis of newly formed triglyceride stores and plays a role in very low-density lipoprotein assembly. Displays serine esterase activity in liver. Deacetylates a variety of arylacetamide substrates, including xenobiotic compounds and procarcinogens, converting them to the primary arylamide compounds and increasing their toxicity. The chain is Arylacetamide deacetylase (AADAC) from Bos taurus (Bovine).